Reading from the N-terminus, the 252-residue chain is Chitooligosaccharide deacetylase (252 aa).

The Mg(2+) site is built by histidine 61 and histidine 125.

It belongs to the YdjC deacetylase family. ChbG subfamily. As to quaternary structure, homodimer. The cofactor is Mg(2+).

Its subcellular location is the cytoplasm. The enzyme catalyses N,N'-diacetylchitobiose + H2O = N-acetyl-beta-D-glucosaminyl-(1-&gt;4)-D-glucosamine + acetate. It carries out the reaction diacetylchitobiose-6'-phosphate + H2O = N'-monoacetylchitobiose-6'-phosphate + acetate. It participates in glycan degradation; chitin degradation. In terms of biological role, involved in the degradation of chitin. ChbG is essential for growth on the acetylated chitooligosaccharides chitobiose and chitotriose but is dispensable for growth on cellobiose and chitosan dimer, the deacetylated form of chitobiose. Deacetylation of chitobiose-6-P and chitotriose-6-P is necessary for both the activation of the chb promoter by the regulatory protein ChbR and the hydrolysis of phosphorylated beta-glucosides by the phospho-beta-glucosidase ChbF. Catalyzes the removal of only one acetyl group from chitobiose-6-P to yield monoacetylchitobiose-6-P, the inducer of ChbR and the substrate of ChbF. The polypeptide is Chitooligosaccharide deacetylase (Salmonella dublin (strain CT_02021853)).